Here is a 116-residue protein sequence, read N- to C-terminus: Non-specific lipid-transfer protein 10 (116 aa).

The N-terminal stretch at 1-22 (MMRVVLPLCLLLASIFAWGSEA) is a signal peptide. Intrachain disulfides connect Cys26-Cys73, Cys36-Cys50, Cys51-Cys98, and Cys71-Cys112.

It belongs to the plant LTP family.

Plant non-specific lipid-transfer proteins transfer phospholipids as well as galactolipids across membranes. May play a role in wax or cutin deposition in the cell walls of expanding epidermal cells and certain secretory tissues. The protein is Non-specific lipid-transfer protein 10 (LTP10) of Arabidopsis thaliana (Mouse-ear cress).